The following is an 836-amino-acid chain: Ethylene receptor 3 (836 aa).

The next 3 membrane-spanning stretches (helical) occupy residues 137–157 (LIAA…AGLR), 166–186 (LVQF…TAFT), and 204–224 (LTAL…PQLL). The Cu cation site is built by Cys176 and His180. The 145-residue stretch at 269–413 (DRHTVLYTTL…VVAGQVAVAL (145 aa)) folds into the GAF domain. Positions 416–452 (ATLLEESRAMRDRLAEQNRELLQARRDALMANEARQA) form a coiled coil. Residues 457-691 (MSQGMRRPIH…LVLRFQLQSP (235 aa)) form the Histidine kinase domain. Positions 718–834 (LLIDDDDDIN…LKDELARILQ (117 aa)) constitute a Response regulatory domain.

Belongs to the ethylene receptor family. It depends on Cu cation as a cofactor.

It localises to the endoplasmic reticulum membrane. The catalysed reaction is ATP + protein L-histidine = ADP + protein N-phospho-L-histidine.. In terms of biological role, ethylene receptor related to bacterial two-component regulators. Acts as a negative regulator of ethylene signaling. May delay the transition from the vegetative stage to the floral stage by up-regulating GI (GIGANTEA) and RCN1 and cause starch accumulation in stems by down-regulating the alpha-amylase AMY3D. The polypeptide is Ethylene receptor 3 (Oryza sativa subsp. indica (Rice)).